A 503-amino-acid chain; its full sequence is Transcriptional regulator LovE (503 aa).

Residues 35–67 (CDRCHAQKIKCTGNKEVTGRAPCQRCQQAGLRC) constitute a DNA-binding region (zn(2)-C6 fungal-type). Disordered stretches follow at residues 89 to 124 (ADPD…RQFL) and 331 to 358 (SHMS…HSSV). Low complexity predominate over residues 339 to 357 (SRSQSPSRDDTSSSSGHSS).

Its subcellular location is the nucleus. Functionally, transcription factor that regulates the expression of the he gene cluster that mediates the biosynthesis of lovastatin (also known as mevinolin, mevacor or monacolin K), a hypolipidemic inhibitor of (3S)-hydroxymethylglutaryl-coenzyme A (HMG-CoA) reductase (HMGR). The protein is Transcriptional regulator LovE of Aspergillus terreus.